The following is a 77-amino-acid chain: ATP synthase subunit c (77 aa).

2 consecutive transmembrane segments (helical) span residues 7-27 and 57-77; these read AFKY…AALG and VGLI…ILFL.

This sequence belongs to the ATPase C chain family. F-type ATPases have 2 components, F(1) - the catalytic core - and F(0) - the membrane proton channel. F(1) has five subunits: alpha(3), beta(3), gamma(1), delta(1), epsilon(1). F(0) has three main subunits: a(1), b(2) and c(10-14). The alpha and beta chains form an alternating ring which encloses part of the gamma chain. F(1) is attached to F(0) by a central stalk formed by the gamma and epsilon chains, while a peripheral stalk is formed by the delta and b chains.

The protein resides in the cell membrane. F(1)F(0) ATP synthase produces ATP from ADP in the presence of a proton or sodium gradient. F-type ATPases consist of two structural domains, F(1) containing the extramembraneous catalytic core and F(0) containing the membrane proton channel, linked together by a central stalk and a peripheral stalk. During catalysis, ATP synthesis in the catalytic domain of F(1) is coupled via a rotary mechanism of the central stalk subunits to proton translocation. Its function is as follows. Key component of the F(0) channel; it plays a direct role in translocation across the membrane. A homomeric c-ring of between 10-14 subunits forms the central stalk rotor element with the F(1) delta and epsilon subunits. This chain is ATP synthase subunit c, found in Lactobacillus helveticus (strain DPC 4571).